Consider the following 319-residue polypeptide: Glutathione synthetase (319 aa).

The region spanning 125 to 311 (EKLFATLFPQ…IGGLLMDAIE (187 aa)) is the ATP-grasp domain. 151 to 208 (FAEQQGDVILKPLDGMGGASIFRHRAGDPNLSVILETLTAHGTQQIMAQGYLPAIKDG) provides a ligand contact to ATP. Mg(2+) contacts are provided by Glu282 and Asn284.

It belongs to the prokaryotic GSH synthase family. The cofactor is Mg(2+). Requires Mn(2+) as cofactor.

It catalyses the reaction gamma-L-glutamyl-L-cysteine + glycine + ATP = glutathione + ADP + phosphate + H(+). It participates in sulfur metabolism; glutathione biosynthesis; glutathione from L-cysteine and L-glutamate: step 2/2. The sequence is that of Glutathione synthetase from Pseudomonas syringae pv. tomato (strain ATCC BAA-871 / DC3000).